The following is a 955-amino-acid chain: Probable autotransporter YcgV (955 aa).

A disordered region spans residues 616–659; that stretch reads ASGTVPEPTPNPEPTPAPAQPPIVNPDPTPEPAPTPKPTTTADA. Over residues 622–652 the composition is skewed to pro residues; that stretch reads EPTPNPEPTPAPAQPPIVNPDPTPEPAPTPK. The region spanning 687 to 955 is the Autotransporter domain; sequence NQSKDGNIWL…QVNGGYRFSF (269 aa).

Upon overexpression shows increased adherence to polyvinyl chloride (PVC) plates, increased mature biofilm formation. The sequence is that of Probable autotransporter YcgV (ycgV) from Escherichia coli (strain K12).